We begin with the raw amino-acid sequence, 515 residues long: MVLDLDLFRTDKGGDPEIIRETQRKRFKDVSLVDKLVQADTEWRKCRFTADNLNKAKNLCSKSIGEKMKKKEPVGDDDTLPEEAQNLEALTAETLSPLTVTQIKKVRVLVDEAVQKTDSDRLKLEAERFEYLREIGNLLHPSVPISNDEDADNKVERTWGDCTVQKKYSHVDLVVMVDGYEGEKGAIVAGSRGYFLKGPLVFLEQALINYALRILYSKNYNLLYTPFFMRKEVMQEVAQLSQFDEELYKVIGKGSEKSDDNTVDEKYLIATSEQPIAAFLRDEWLKPEELPIRYAGLSTCFRQEVGSHGRDTRGIFRVHQFEKIEQFVYASPHDGKSWEMFDEMIGTAESFYQTLGIPYRIVNIVSGALNHAASKKLDLEAWFPGSQAFRELVSCSNCTDYQARRLRIRYGQTKKMMDKAEFVHMLNATMCATTRVICAILENFQTEEGIIVPEPLKAFMPPGLTEIIKFVKPAPIDQETTKKQKKQQEGGKKKKHQGGDADLENKVENMSVNDS.

The interaction with tRNA stretch occupies residues Arg9–Ser61. L-serine-binding residues include Thr271 and Arg302. Residues Arg302 to Glu304 and Val318 to Phe321 contribute to the ATP site. Glu325 lines the L-serine pocket. An ATP-binding site is contributed by Glu391–Ser394. Asn427 provides a ligand contact to L-serine. The tract at residues Pro475–Ser515 is disordered. The segment covering Glu479–Val507 has biased composition (basic and acidic residues). Residues Lys482 to Lys494 carry the Nuclear localization signal motif.

The protein belongs to the class-II aminoacyl-tRNA synthetase family. Type-1 seryl-tRNA synthetase subfamily.

Its subcellular location is the cytoplasm. It localises to the nucleus. It catalyses the reaction tRNA(Ser) + L-serine + ATP = L-seryl-tRNA(Ser) + AMP + diphosphate + H(+). The catalysed reaction is tRNA(Sec) + L-serine + ATP = L-seryl-tRNA(Sec) + AMP + diphosphate + H(+). In terms of biological role, catalyzes the attachment of serine to tRNA(Ser) in a two-step reaction: serine is first activated by ATP to form Ser-AMP and then transferred to the acceptor end of tRNA(Ser). Is probably also able to aminoacylate tRNA(Sec) with serine, to form the misacylated tRNA L-seryl-tRNA(Sec), which will be further converted into selenocysteinyl-tRNA(Sec). In the nucleus, binds to the vegfa core promoter and prevents myc binding and transcriptional activation by myc. Thereby inhibits the production of vegfa and sprouting angiogenesis mediated by vegfa. The protein is Serine--tRNA ligase, cytoplasmic (sars1) of Danio rerio (Zebrafish).